The primary structure comprises 300 residues: SNAP25 homologous protein SNAP33 (300 aa).

Disordered regions lie at residues 1–76 (MFGL…QSLF) and 176–228 (WKPK…PESA). Serine 29 is modified (phosphoserine). The span at 38–49 (TLNPSKRTTSEP) shows a compositional bias: polar residues. A compositionally biased stretch (basic and acidic residues) spans 190–208 (TRDDSPTRRVNHLEKREKL). Residues 235-297 (EMEKAKQDDG…QQSNQRGRRL (63 aa)) form the t-SNARE coiled-coil homology domain.

This sequence belongs to the SNAP-25 family. In terms of assembly, interacts with the cytokinesis-specific syntaxin KNOLLE and with SYP121. Binds to EXO70B2. As to expression, ubiquitous, with a strong expression in root tips, ovules, very young leaves, vascular tissue, hydathodes, stipules and the abscission and dehiscence zones of the siliques.

The protein resides in the membrane. Functionally, t-SNARE involved in diverse vesicle trafficking and membrane fusion processes, including cell plate formation. May function in the secretory pathway. The sequence is that of SNAP25 homologous protein SNAP33 from Arabidopsis thaliana (Mouse-ear cress).